The chain runs to 89 residues: Large ribosomal subunit protein bL28 (89 aa).

Belongs to the bacterial ribosomal protein bL28 family.

The protein is Large ribosomal subunit protein bL28 of Chlamydia trachomatis serovar L2 (strain ATCC VR-902B / DSM 19102 / 434/Bu).